Here is a 1047-residue protein sequence, read N- to C-terminus: Suppression of tumorigenicity 18 protein (1047 aa).

Disordered regions lie at residues 41-92 (TAED…HSTA), 168-221 (FLIH…VPKY), and 251-286 (DSET…SESL). Residues 52-65 (NKRKSLLMKPRHYS) are compositionally biased toward basic residues. A compositionally biased stretch (basic and acidic residues) spans 171 to 181 (HSDDGRDKIDD). CCHHC-type zinc fingers lie at residues 359–402 (PRPE…PLEI) and 403–446 (LAMH…KLAM). The Zn(2+) site is built by Cys-368, Cys-373, His-386, Cys-392, Cys-412, Cys-417, His-430, and Cys-436. 2 disordered regions span residues 523–563 (GRKT…SYSY) and 672–710 (YSKT…SPKP). A compositionally biased stretch (polar residues) spans 550-563 (AHTQSPGRASSYSY). The span at 677–687 (GKTEEEKEKDP) shows a compositional bias: basic and acidic residues. 4 CCHHC-type zinc fingers span residues 715–758 (RDLK…LKSL), 759–802 (MAAN…GVKM), 807–850 (EEKE…QKEN), and 860–903 (KLNK…IKKG). Residues Cys-724, Cys-729, His-742, Cys-748, Cys-768, Cys-773, His-786, Cys-792, Cys-816, Cys-821, His-834, Cys-840, Cys-869, Cys-874, His-887, and Cys-893 each coordinate Zn(2+). The stretch at 920 to 992 (IESDEEIRHL…AGLSQALISS (73 aa)) forms a coiled coil.

Belongs to the MYT1 family. Detected at low levels in heart, liver, kidney, skeletal muscle, pancreas, testis, ovary and prostate. Detected at even lower levels in mammary epithelial cells and breast cancer cells.

It localises to the nucleus. Its function is as follows. Repressor that binds to DNA sequences containing a bipartite element consisting of a direct repeat of the sequence 5'-AAAGTTT-3' separated by 2-9 nucleotides. Represses basal transcription activity from target promoters. Inhibits colony formation in cultured breast cancer cells. The chain is Suppression of tumorigenicity 18 protein (ST18) from Homo sapiens (Human).